We begin with the raw amino-acid sequence, 224 residues long: DeSI-like protein At4g17486 (224 aa).

Residues T26–I163 enclose the PPPDE domain. Active-site residues include H51 and C125. The interval E176–I201 is disordered.

Belongs to the DeSI family.

This is DeSI-like protein At4g17486 from Arabidopsis thaliana (Mouse-ear cress).